Here is a 285-residue protein sequence, read N- to C-terminus: Diaminopimelate epimerase 2 (285 aa).

Substrate is bound by residues Asn11, Asn63, 73–74, Asn158, Asn191, 209–210, and 219–220; these read GN, ER, and GS.

Belongs to the diaminopimelate epimerase family. As to quaternary structure, homodimer.

The protein localises to the cytoplasm. It catalyses the reaction (2S,6S)-2,6-diaminopimelate = meso-2,6-diaminopimelate. Its pathway is amino-acid biosynthesis; L-lysine biosynthesis via DAP pathway; DL-2,6-diaminopimelate from LL-2,6-diaminopimelate: step 1/1. In terms of biological role, catalyzes the stereoinversion of LL-2,6-diaminopimelate (L,L-DAP) to meso-diaminopimelate (meso-DAP), a precursor of L-lysine and an essential component of the bacterial peptidoglycan. The polypeptide is Diaminopimelate epimerase 2 (Nostoc sp. (strain PCC 7120 / SAG 25.82 / UTEX 2576)).